Reading from the N-terminus, the 350-residue chain is Putative F-box protein At1g23770 (350 aa).

Over residues 1-15 (MDTGFADSNNDSSPG) the composition is skewed to polar residues. The tract at residues 1–29 (MDTGFADSNNDSSPGEGSKRGNSGIEGPV) is disordered. An F-box domain is found at 206–252 (PPCLMLLPTELKLKILELLPGVSIGYMACVCTEMRYLASDNDLWEHK).

The chain is Putative F-box protein At1g23770 from Arabidopsis thaliana (Mouse-ear cress).